The following is a 434-amino-acid chain: Serine--tRNA ligase (434 aa).

L-serine is bound at residue 239–241; sequence TAE. Residue 270–272 participates in ATP binding; sequence RSE. Glutamate 293 provides a ligand contact to L-serine. Residue 357–360 coordinates ATP; it reads EISS. Residue serine 392 coordinates L-serine.

It belongs to the class-II aminoacyl-tRNA synthetase family. Type-1 seryl-tRNA synthetase subfamily. In terms of assembly, homodimer. The tRNA molecule binds across the dimer.

Its subcellular location is the cytoplasm. It carries out the reaction tRNA(Ser) + L-serine + ATP = L-seryl-tRNA(Ser) + AMP + diphosphate + H(+). The catalysed reaction is tRNA(Sec) + L-serine + ATP = L-seryl-tRNA(Sec) + AMP + diphosphate + H(+). Its pathway is aminoacyl-tRNA biosynthesis; selenocysteinyl-tRNA(Sec) biosynthesis; L-seryl-tRNA(Sec) from L-serine and tRNA(Sec): step 1/1. In terms of biological role, catalyzes the attachment of serine to tRNA(Ser). Is also able to aminoacylate tRNA(Sec) with serine, to form the misacylated tRNA L-seryl-tRNA(Sec), which will be further converted into selenocysteinyl-tRNA(Sec). The sequence is that of Serine--tRNA ligase from Cupriavidus taiwanensis (strain DSM 17343 / BCRC 17206 / CCUG 44338 / CIP 107171 / LMG 19424 / R1) (Ralstonia taiwanensis (strain LMG 19424)).